Reading from the N-terminus, the 107-residue chain is UPF0145 protein CHY_0465 (107 aa).

This sequence belongs to the UPF0145 family.

The chain is UPF0145 protein CHY_0465 from Carboxydothermus hydrogenoformans (strain ATCC BAA-161 / DSM 6008 / Z-2901).